The chain runs to 146 residues: Putative transposon Ty5-1 protein YCL075W (146 aa).

The sequence is that of Putative transposon Ty5-1 protein YCL075W (TY5B) from Saccharomyces cerevisiae (strain ATCC 204508 / S288c) (Baker's yeast).